Reading from the N-terminus, the 977-residue chain is Pro-apoptotic serine protease NMA111 (977 aa).

Residues 1-36 (MTIQAHKRTLSEVSTSSVGQLKRREGYTEDYTDEGS) form a disordered region. The interval 64–254 (VVSVHFAQVA…LPLDRILRAL (191 aa)) is serine protease. Catalysis depends on charge relay system residues His102, Asp133, and Ser216. PDZ domains lie at 271 to 356 (QWLL…LVVQ) and 749 to 835 (SVLQ…VRKG).

The protein belongs to the peptidase S1C family.

The protein resides in the nucleus. Its function is as follows. Nuclear serine protease which mediates apoptosis. This is Pro-apoptotic serine protease NMA111 (NMA111) from Eremothecium gossypii (strain ATCC 10895 / CBS 109.51 / FGSC 9923 / NRRL Y-1056) (Yeast).